A 669-amino-acid chain; its full sequence is Dymeclin (669 aa).

Glycine 2 carries N-myristoyl glycine lipidation.

Belongs to the dymeclin family. As to quaternary structure, interacts with GOLM1 and PPIB. Myristoylated in vitro; myristoylation is not essential for protein targeting to Golgi compartment.

It localises to the cytoplasm. Its subcellular location is the golgi apparatus. The protein resides in the membrane. Functionally, necessary for correct organization of Golgi apparatus. Involved in bone development. This Mus musculus (Mouse) protein is Dymeclin (Dym).